Here is a 184-residue protein sequence, read N- to C-terminus: Ras-related protein Rap1 (184 aa).

10 to 17 contacts GTP; the sequence is GSGGVGKS. The Effector region signature appears at 32–40; it reads YDPTIEDSY. GTP-binding positions include 57-61 and 116-119; these read DTAGT and NKCD. C181 carries the cysteine methyl ester modification. C181 carries S-geranylgeranyl cysteine lipidation. Positions 182 to 184 are cleaved as a propeptide — removed in mature form; the sequence is VLL.

This sequence belongs to the small GTPase superfamily. Ras family.

Its subcellular location is the cell membrane. It carries out the reaction GTP + H2O = GDP + phosphate + H(+). With respect to regulation, alternates between an inactive form bound to GDP and an active form bound to GTP. Activated by a guanine nucleotide-exchange factor (GEF) and inactivated by a GTPase-activating protein (GAP). Ras proteins bind GDP/GTP and possess intrinsic GTPase activity. Plays a role in photoreceptor cell determination. This Drosophila melanogaster (Fruit fly) protein is Ras-related protein Rap1.